Here is a 524-residue protein sequence, read N- to C-terminus: Gamma-taxilin (524 aa).

Basic and acidic residues predominate over residues 1 to 10 (MATRLEEVTR). 2 disordered regions span residues 1–37 (MATRLEEVTRGRGGGTEEASEGGRGGRRRSPPQKFEI) and 64–86 (LQHQDPSCGGTTKKHSLEGDEGS). Arg-12 and Arg-24 each carry omega-N-methylarginine. Residues Ser-79, Ser-86, and Ser-97 each carry the phosphoserine modification. Residues 106-115 (REEIPGREAR) are compositionally biased toward basic and acidic residues. A disordered region spans residues 106-130 (REEIPGREARTGPPDGQQDSECSRN). Residues 153–465 (EEKLAALCKK…KEQVSIKAAD (313 aa)) adopt a coiled-coil conformation. Residue Tyr-283 is modified to Phosphotyrosine. A disordered region spans residues 501 to 524 (VCEKSAAQKPSSSGSPAQGIESVD). Ser-512 is subject to Phosphoserine.

The protein belongs to the taxilin family. As to quaternary structure, binds to the C-terminal coiled coil region of syntaxin family members STX1A, STX3A and STX4A. Forms a heterodimer with ATF4 in osteoblasts.

It localises to the nucleus membrane. The protein localises to the cytoplasm. Its subcellular location is the cytosol. May be involved in intracellular vesicle traffic. Inhibits ATF4-mediated transcription, possibly by dimerizing with ATF4 to form inactive dimers that cannot bind DNA. May be involved in regulating bone mass density through an ATF4-dependent pathway. May be involved in cell cycle progression. The protein is Gamma-taxilin (Txlng) of Mus musculus (Mouse).